We begin with the raw amino-acid sequence, 62 residues long: MAEPQDMWRCQMVNCGYVYDPDRGDKRRKVPAGTKFEDLPEDWRCPVCGAGKKSFRRLSDEA.

The 52-residue stretch at 7 to 58 folds into the Rubredoxin-like domain; sequence MWRCQMVNCGYVYDPDRGDKRRKVPAGTKFEDLPEDWRCPVCGAGKKSFRRL. Residues Cys10, Cys15, Cys45, and Cys48 each coordinate Fe cation.

Belongs to the rubredoxin family. As to quaternary structure, monomer. Requires Fe(3+) as cofactor.

Rubredoxin is a small nonheme, iron protein lacking acid-labile sulfide. Its single Fe, chelated to 4 Cys, functions as an electron acceptor and may also stabilize the conformation of the molecule. The chain is Rubredoxin-2 (rd2) from Desulfovibrio desulfuricans (strain ATCC 27774 / DSM 6949 / MB).